We begin with the raw amino-acid sequence, 584 residues long: AP-1-like transcription factor yap1 (584 aa).

Residues 23 to 179 form a disordered region; sequence LAALSSNQPP…AFRERKEKHL (157 aa). The Bipartite nuclear localization signal motif lies at 35-42; sequence QQNDKQRS. Residues 36–48 show a composition bias toward basic and acidic residues; sequence QNDKQRSQAKTDP. A compositionally biased stretch (low complexity) spans 52–67; the sequence is PGNMSSGSFSMSPGFN. The Bipartite nuclear localization signal signature appears at 68–75; sequence KTHPGSGG. Acidic residues predominate over residues 79–94; it reads GDDESPFLDFNPELDF. Basic and acidic residues-rich tracts occupy residues 112-144 and 170-179; these read SEEH…DKAA and AFRERKEKHL. In terms of domain architecture, bZIP spans 154–217; it reads SEPTSKRKAQ…ERLQVELREY (64 aa). The basic motif stretch occupies residues 159–180; sequence KRKAQNRAAQRAFRERKEKHLK. The interval 182-189 is leucine-zipper; it reads LETKVDEL. Residues 211–332 are transcription activation 1; that stretch reads QVELREYRKR…PSPKVPSVYN (122 aa). Disordered stretches follow at residues 267–379 and 418–441; these read IFNG…TKLN and RGKS…TPGP. Residues 284 to 296 are n-CRD; sequence SSPATSDSQVPGV. A compositionally biased stretch (polar residues) spans 300-309; it reads ETLNGSNNRG. The segment covering 336–362 has biased composition (low complexity); it reads SASSHDSSNSCSPSSSSDSHQSQMLSS. Polar residues-rich tracts occupy residues 363–379 and 422–437; these read NGTS…TKLN and ESVS…NYEQ. A transcription activation 2 region spans residues 377–480; the sequence is KLNDSVQNHH…SQDFGTFFDD (104 aa). Cystine bridges form between Cys531–Cys555, Cys531–Cys564, and Cys555–Cys564. Residues 531-564 form a c-CRD region; sequence CTKIWDRLQSMEKFRNGEIDVDNLCSELRTKARC. Residues 549-556 carry the Nuclear export signal motif; that stretch reads IDVDNLCS.

The protein belongs to the bZIP family. YAP subfamily. Depending on the oxidative stress inducing agent, yap1 can undergo two distinct conformational changes, both involving disulfide bond formation, and both masking the nuclear export signal, thus abolishing nuclear export.

Its subcellular location is the nucleus. The protein localises to the cytoplasm. Functionally, transcription activator involved in oxidative stress response and redox homeostasis. Regulates the transcription of genes encoding antioxidant enzymes and components of the cellular thiol-reducing pathways. May be involved in antifungal resistance to voriconazole. This chain is AP-1-like transcription factor yap1, found in Aspergillus flavus (strain ATCC 200026 / FGSC A1120 / IAM 13836 / NRRL 3357 / JCM 12722 / SRRC 167).